A 628-amino-acid chain; its full sequence is Inactive sodium-dependent neutral amino acid transporter B(0)AT3 (628 aa).

The Cytoplasmic portion of the chain corresponds to Met1–Gln26. The chain crosses the membrane as a helical span at residues Tyr27 to Leu47. The Extracellular segment spans residues Cys48–Tyr51. The chain crosses the membrane as a helical span at residues Gly52–Val74. The Cytoplasmic portion of the chain corresponds to Glu75–Gly88. Residues Val89–Ile111 form a helical membrane-spanning segment. Topologically, residues Ser112 to Ser178 are extracellular. N-linked (GlcNAc...) asparagine glycans are attached at residues Asn144, Asn168, and Asn174. Residues Ile179 to Gly201 form a helical membrane-spanning segment. Residues Ile202–Lys207 lie on the Cytoplasmic side of the membrane. The chain crosses the membrane as a helical span at residues Val208–Leu230. Residues Pro231–Val253 are Extracellular-facing. Residues Trp254 to Ala276 form a helical membrane-spanning segment. The Cytoplasmic segment spans residues Ser277–Asp288. A helical transmembrane segment spans residues Ala289–Leu311. Topologically, residues Gly312–Ala399 are extracellular. An N-linked (GlcNAc...) asparagine glycan is attached at Asn354. Residues Pro400–Val422 form a helical membrane-spanning segment. At Glu423–Glu442 the chain is on the cytoplasmic side. The helical transmembrane segment at Ala443–Asn465 threads the bilayer. Residues Tyr466–Phe474 are Extracellular-facing. The helical transmembrane segment at Ala475–Met497 threads the bilayer. Topologically, residues Lys498–Arg517 are cytoplasmic. Residues Leu518 to Trp540 traverse the membrane as a helical segment. Over Lys541–Arg568 the chain is Extracellular. The helical transmembrane segment at Ala569–Leu591 threads the bilayer. The Cytoplasmic segment spans residues Thr592–Arg628. The interval Asp602 to Arg628 is disordered.

It belongs to the sodium:neurotransmitter symporter (SNF) (TC 2.A.22) family. SLC6A18 subfamily. As to expression, abundantly expressed in kidney, but not in intestine.

Its subcellular location is the membrane. Functionally, does not show neutral amino acid transporter activity. The protein is Inactive sodium-dependent neutral amino acid transporter B(0)AT3 of Homo sapiens (Human).